The sequence spans 406 residues: Dual-specificity RNA methyltransferase RlmN (406 aa).

E121 (proton acceptor) is an active-site residue. One can recognise a Radical SAM core domain in the interval 127–377; that stretch reads ERDRGTLCVS…VRTPRGRDIL (251 aa). A disulfide bridge connects residues C134 and C380. C141, C145, and C148 together coordinate [4Fe-4S] cluster. Residues 206 to 207, S238, 260 to 262, and N337 each bind S-adenosyl-L-methionine; these read GE and SLH. The active-site S-methylcysteine intermediate is the C380.

The protein belongs to the radical SAM superfamily. RlmN family. Requires [4Fe-4S] cluster as cofactor.

It localises to the cytoplasm. The enzyme catalyses adenosine(2503) in 23S rRNA + 2 reduced [2Fe-2S]-[ferredoxin] + 2 S-adenosyl-L-methionine = 2-methyladenosine(2503) in 23S rRNA + 5'-deoxyadenosine + L-methionine + 2 oxidized [2Fe-2S]-[ferredoxin] + S-adenosyl-L-homocysteine. It catalyses the reaction adenosine(37) in tRNA + 2 reduced [2Fe-2S]-[ferredoxin] + 2 S-adenosyl-L-methionine = 2-methyladenosine(37) in tRNA + 5'-deoxyadenosine + L-methionine + 2 oxidized [2Fe-2S]-[ferredoxin] + S-adenosyl-L-homocysteine. In terms of biological role, specifically methylates position 2 of adenine 2503 in 23S rRNA and position 2 of adenine 37 in tRNAs. m2A2503 modification seems to play a crucial role in the proofreading step occurring at the peptidyl transferase center and thus would serve to optimize ribosomal fidelity. The polypeptide is Dual-specificity RNA methyltransferase RlmN (Azorhizobium caulinodans (strain ATCC 43989 / DSM 5975 / JCM 20966 / LMG 6465 / NBRC 14845 / NCIMB 13405 / ORS 571)).